The primary structure comprises 271 residues: MTYLQESSRPAVTVPKLQAMREAGEKIAMLTSYDASFAALLDRANVDVQLIGDSLGNVLQGQATTLPVTLDDIAYHTACVARAQPRGLVVADLPFGTYGTPADAFASAVKLMRAGAQMVKLEGGEWLAETVRFLVERAVPVCAHVGLTPQSVHAFGGFKVQGKTEAGAAQLLRDARAVEEAGAQLIVLEAVPTLVAAEVTRELSIPTIGIGAGAECSGQVLVLHDMLGVFPGKRPRFVKDFMQGQPSIFAAVEAYVRAVKDGSFPGPEHSF.

Mg(2+) is bound by residues aspartate 53 and aspartate 92. Residues 53 to 54 (DS), aspartate 92, and lysine 120 each bind 3-methyl-2-oxobutanoate. Glutamate 122 provides a ligand contact to Mg(2+). Glutamate 189 serves as the catalytic Proton acceptor.

It belongs to the PanB family. Homodecamer; pentamer of dimers. It depends on Mg(2+) as a cofactor.

The protein localises to the cytoplasm. It carries out the reaction 3-methyl-2-oxobutanoate + (6R)-5,10-methylene-5,6,7,8-tetrahydrofolate + H2O = 2-dehydropantoate + (6S)-5,6,7,8-tetrahydrofolate. It participates in cofactor biosynthesis; (R)-pantothenate biosynthesis; (R)-pantoate from 3-methyl-2-oxobutanoate: step 1/2. Functionally, catalyzes the reversible reaction in which hydroxymethyl group from 5,10-methylenetetrahydrofolate is transferred onto alpha-ketoisovalerate to form ketopantoate. The protein is 3-methyl-2-oxobutanoate hydroxymethyltransferase of Burkholderia mallei (strain NCTC 10247).